A 494-amino-acid polypeptide reads, in one-letter code: MAAEAPSGGEAPVCDSGRSDAICNFVICNDSPLRGQPIIFNPDFFVEKLRHEKPEVFTELVVSNITRLIDLPGTELAQLMGEVDLKLPGGAGPAAGFFRSLMSLKRKEKGVVFGSPLTEEGIAQIYQLIEYLHKNLRVEGLFRVPGNSVRQQLLRDALNNGTDIDLDSGEFHSNDVATLLKMFLGELPEPLLTHKHFHVHLKIADLMQFDDKGNKTNIPDKERQIEALQLLFLILPPANRNLLKLLLDLLYQTAKKQDKNKMSAHNLALMFAPHVLWPKNVTANDLQENIIKLNTGMAFMIKHSQKLFKAPAYIRECARLYYLGSRTQMSKDDLDLTTSCHNMSFQLARCQRQNRVDPSSQQEETQQHTEEALRELFQHVHNWPDSAKKKQLLRQFHKQSLTQTPGREPSTPRVQKRARSRSFSGLIKRKVLGSQMTSEKKNSSPAPESVAMGELKKASKENMNLFFSGSPAGTVTPTRLKWSEAKREGRKGFF.

An N-acetylalanine modification is found at Ala-2. Phosphoserine occurs at positions 7 and 31. A Rho-GAP domain is found at 102–308 (MSLKRKEKGV…FMIKHSQKLF (207 aa)). Residues 399–451 (QSLTQTPGREPSTPRVQKRARSRSFSGLIKRKVLGSQMTSEKKNSSPAPESVA) are disordered. 3 positions are modified to phosphoserine: Ser-422, Ser-438, and Ser-470. Thr-478 is modified (phosphothreonine).

In terms of biological role, GTPase activator for the Rho-type GTPases by converting them to an inactive GDP-bound state. This Mus musculus (Mouse) protein is Rho GTPase-activating protein 19 (Arhgap19).